A 383-amino-acid polypeptide reads, in one-letter code: Outer membrane protein S2 (383 aa).

An N-terminal signal peptide occupies residues 1-21 (MKRKVLALVIPALLAAGAAHA).

Belongs to the Gram-negative porin family. As to quaternary structure, homotrimer.

The protein resides in the cell outer membrane. Forms pores that allow passive diffusion of small molecules across the outer membrane. The protein is Outer membrane protein S2 (ompS2) of Salmonella typhi.